We begin with the raw amino-acid sequence, 118 residues long: HTH-type transcriptional regulator CmtR (118 aa).

An HTH arsR-type domain is found at 3 to 97 (TCEMRESALA…ELVQVVLAVD (95 aa)). Cd(2+) contacts are provided by cysteine 57, cysteine 61, and cysteine 102.

Homodimer.

Metal-responsive transcriptional repressor for the cmt operon. Binding of cadmium or lead causes the repressor to dissociate from the DNA. The polypeptide is HTH-type transcriptional regulator CmtR (cmtR) (Mycobacterium bovis (strain ATCC BAA-935 / AF2122/97)).